The primary structure comprises 986 residues: Vacuolar membrane protease (986 aa).

At 1–16 (MAPLRLSRANPLAFAR) the chain is on the cytoplasmic side. A helical membrane pass occupies residues 17–37 (WPVTLITAVVYLAFLIPLLIV). At 38-392 (HHVVPSPPTA…TTFVLFELHT (355 aa)) the chain is on the vacuolar side. An N-linked (GlcNAc...) asparagine glycan is attached at Asn-121. Zn(2+) contacts are provided by His-176 and Asp-188. Residue Glu-222 is the Proton acceptor of the active site. The Zn(2+) site is built by Glu-223, Glu-248, and His-321. A helical membrane pass occupies residues 393–413 (LFALSVTLLVVAPLALLVTGI). The Cytoplasmic portion of the chain corresponds to 414-444 (ALTRADKMYLFRTSAKADESLDSVPLQGLRG). The chain crosses the membrane as a helical span at residues 445–465 (FFRFPFLFAIPTAVTVGLAYL). The Vacuolar segment spans residues 466 to 475 (VTKVNPLIIH). Residues 476–496 (SSEYAVWSMMLSAWTFLAWFV) traverse the membrane as a helical segment. Residues 497-510 (SRMADFARPTALHR) are Cytoplasmic-facing. The chain crosses the membrane as a helical span at residues 511–531 (IYTLTWMFVLAWVLLVISTVY). The Vacuolar portion of the chain corresponds to 532–535 (QNQR). A helical membrane pass occupies residues 536–556 (GLAGSYSVFFFFSGTFLATWI). Topologically, residues 557-668 (SYLELFSLPR…SASLPTWTWT (112 aa)) are cytoplasmic. Residues 573–585 (QNRPTSRRASSYG) show a composition bias toward polar residues. Residues 573-622 (QNRPTSRRASSYGGSRLGTASGEDHEEDDHDAEEEEEEQEPTESTSLLGG) form a disordered region. The span at 596 to 613 (DHEEDDHDAEEEEEEQEP) shows a compositional bias: acidic residues. A helical transmembrane segment spans residues 669 to 689 (LQFLLMAPLVLIMVGPLALLL). Residues 690-704 (TSALHQTGQDGSSSL) are Vacuolar-facing. A helical transmembrane segment spans residues 705 to 725 (FIYVAIAALTTFLLTPLLPFI). The Cytoplasmic segment spans residues 726–732 (HRHTYHL). The chain crosses the membrane as a helical span at residues 733-753 (PVFLLLVFLGTLIYNLVAFPF). Residues 754–986 (SPTNRLKLFF…LVEGWKGFSI (233 aa)) lie on the Vacuolar side of the membrane. 3 N-linked (GlcNAc...) asparagine glycosylation sites follow: Asn-799, Asn-840, and Asn-948. A disordered region spans residues 840–859 (NTTDDKEGDEDTHHPRKARI).

Belongs to the peptidase M28 family. Requires Zn(2+) as cofactor.

Its subcellular location is the vacuole membrane. Functionally, may be involved in vacuolar sorting and osmoregulation. The chain is Vacuolar membrane protease from Aspergillus niger (strain ATCC MYA-4892 / CBS 513.88 / FGSC A1513).